Here is a 110-residue protein sequence, read N- to C-terminus: Large ribosomal subunit protein uL22 (110 aa).

The protein belongs to the universal ribosomal protein uL22 family. Part of the 50S ribosomal subunit.

Its function is as follows. This protein binds specifically to 23S rRNA; its binding is stimulated by other ribosomal proteins, e.g. L4, L17, and L20. It is important during the early stages of 50S assembly. It makes multiple contacts with different domains of the 23S rRNA in the assembled 50S subunit and ribosome. Functionally, the globular domain of the protein is located near the polypeptide exit tunnel on the outside of the subunit, while an extended beta-hairpin is found that lines the wall of the exit tunnel in the center of the 70S ribosome. The sequence is that of Large ribosomal subunit protein uL22 from Solidesulfovibrio magneticus (strain ATCC 700980 / DSM 13731 / RS-1) (Desulfovibrio magneticus).